The sequence spans 426 residues: C4-dicarboxylate transport protein (426 aa).

A run of 8 helical transmembrane segments spans residues 8–28, 44–64, 78–98, 148–168, 173–193, 222–242, 297–317, and 355–375; these read VLYV…HFYP, LIKM…IAGM, LLYF…ATHV, GEIL…ATAG, VVTG…RIIT, LIGT…GIIA, GYSF…LFIA, and AATL…ILGI.

Belongs to the dicarboxylate/amino acid:cation symporter (DAACS) (TC 2.A.23) family.

It localises to the cell inner membrane. Responsible for the transport of dicarboxylates such as succinate, fumarate, and malate from the periplasm across the membrane. This chain is C4-dicarboxylate transport protein, found in Paraburkholderia xenovorans (strain LB400).